A 448-amino-acid polypeptide reads, in one-letter code: Serine/threonine-protein phosphatase 2A regulatory subunit B'' subunit gamma (448 aa).

2 consecutive EF-hand domains span residues 268 to 303 and 336 to 371; these read PSAL…TLTC and KEPA…IQEQ. Asp-281, Asp-283, Asn-285, Met-287, and Glu-292 together coordinate Ca(2+).

The protein resides in the nucleus. It is found in the cytoplasm. Its function is as follows. Possible role in the regulation of cell death. This is Serine/threonine-protein phosphatase 2A regulatory subunit B'' subunit gamma (ppp2r3c) from Xenopus tropicalis (Western clawed frog).